Here is a 359-residue protein sequence, read N- to C-terminus: Cyclin-Y-like protein 1 (359 aa).

Phosphoserine is present on residues Ser67, Ser105, and Ser112. The Cyclin N-terminal domain occupies 145 to 267 (VTLAIYYHIK…CQILKDITVE (123 aa)). Phosphoserine is present on Ser344.

Belongs to the cyclin family. Cyclin Y subfamily. As to quaternary structure, interacts with CDK16; this interaction mutually increases the stability of CDK16 and CCNYL1 and increases the kinase activity of CDK16.

The protein resides in the cell membrane. Functionally, key regulator of Wnt signaling implicated in various biological processes including male fertility, embryonic neurogenesis and cortex development. Activates the cyclin-dependent kinase CDK16, and promotes sperm maturation. This chain is Cyclin-Y-like protein 1, found in Homo sapiens (Human).